Here is a 29-residue protein sequence, read N- to C-terminus: Protamine-like protein (29 aa).

The tract at residues 1–29 is disordered; it reads MRSFDQGSTRAPARERCRRQRPEGRSAQR. A compositionally biased stretch (basic and acidic residues) spans 12–29; that stretch reads PARERCRRQRPEGRSAQR.

This is Protamine-like protein (tpr) from Escherichia coli (strain K12).